The primary structure comprises 235 residues: Ubiquinone biosynthesis O-methyltransferase (235 aa).

Positions 39, 59, 80, and 124 each coordinate S-adenosyl-L-methionine.

This sequence belongs to the methyltransferase superfamily. UbiG/COQ3 family.

The catalysed reaction is a 3-demethylubiquinol + S-adenosyl-L-methionine = a ubiquinol + S-adenosyl-L-homocysteine + H(+). The enzyme catalyses a 3-(all-trans-polyprenyl)benzene-1,2-diol + S-adenosyl-L-methionine = a 2-methoxy-6-(all-trans-polyprenyl)phenol + S-adenosyl-L-homocysteine + H(+). The protein operates within cofactor biosynthesis; ubiquinone biosynthesis. Its function is as follows. O-methyltransferase that catalyzes the 2 O-methylation steps in the ubiquinone biosynthetic pathway. This chain is Ubiquinone biosynthesis O-methyltransferase, found in Vibrio parahaemolyticus serotype O3:K6 (strain RIMD 2210633).